The sequence spans 475 residues: MTAVAQKIIENLKMQDEVRSSDIDAPYSEIHGALISLESRGICNVKMEESYEEVLTPEGEEVERSGSQEYLLLESIGEDGMSIEELERHSLGKMNAFRNKWIRREGNRVFRNVESIEDTVRNMVISMKRGTASAEEVEALRKRKLVSRRKKIVFIATKGPMFFDNTSYVTELTSEMVLDGSYRDLSFKHYNFNAEGNAPQCGSIHPLMKIREDFRRIFIELGFSEMATNQYVESSFWNFDALFQPQNHPSRDAHDTFFLLNPELSTDFPSDYLKEVGETHRGGKYNSLGYMSNWDIKEAQKNILRTHTTSVSARNLYRLAKKEFKPAKLFSIDKVFRNETVDATHLAEFHQVEGLVVGKGLNLTHLMGILREFFNRLGMGDIRFKPAFNPYTEPSMEVFGYHKGMDRWIEVGNSGVFRPEMLRPMGFDSDVSVVAWGLSLERPAMIKYGLKNIRELVGHKVDIEFSRKSEICFFD.

A contains the major tRNA-Phe binding sites region spans residues 2-151; sequence TAVAQKIIEN…KRKLVSRRKK (150 aa). L-phenylalanine contacts are provided by residues threonine 309, 351-353, and tyrosine 391; that span reads QVE. Glutamate 393 contacts Mg(2+). Phenylalanine 417 is an L-phenylalanine binding site.

This sequence belongs to the class-II aminoacyl-tRNA synthetase family. Phe-tRNA synthetase alpha subunit type 2 subfamily. Tetramer of two alpha and two beta subunits. The cofactor is Mg(2+).

The protein resides in the cytoplasm. The catalysed reaction is tRNA(Phe) + L-phenylalanine + ATP = L-phenylalanyl-tRNA(Phe) + AMP + diphosphate + H(+). This is Probable phenylalanine--tRNA ligase alpha subunit from Encephalitozoon cuniculi (strain GB-M1) (Microsporidian parasite).